The primary structure comprises 166 residues: CDP-archaeol synthase (166 aa).

4 helical membrane-spanning segments follow: residues 42–62 (FFGGVVSGVLVGLIEIWAATA), 73–93 (FLSVTLLATGALLGDLAKSFL), 104–124 (SWFLADQYDLVVGSFLLILIF), and 128–148 (WLFGTITLPIAVWIVVMTPLL).

The protein belongs to the CDP-archaeol synthase family. Requires Mg(2+) as cofactor.

Its subcellular location is the cell membrane. It catalyses the reaction 2,3-bis-O-(geranylgeranyl)-sn-glycerol 1-phosphate + CTP + H(+) = CDP-2,3-bis-O-(geranylgeranyl)-sn-glycerol + diphosphate. Its pathway is membrane lipid metabolism; glycerophospholipid metabolism. In terms of biological role, catalyzes the formation of CDP-2,3-bis-(O-geranylgeranyl)-sn-glycerol (CDP-archaeol) from 2,3-bis-(O-geranylgeranyl)-sn-glycerol 1-phosphate (DGGGP) and CTP. This reaction is the third ether-bond-formation step in the biosynthesis of archaeal membrane lipids. The chain is CDP-archaeol synthase from Methanoculleus marisnigri (strain ATCC 35101 / DSM 1498 / JR1).